Here is a 206-residue protein sequence, read N- to C-terminus: 21.9 kDa heat shock protein (206 aa).

Positions 1–29 (MAAVAEREVLGMVAAVAAMVVMMAPPAAA) are cleaved as a signal peptide. Residues 65–187 (EPAAVALARC…GREPRVVAID (123 aa)) enclose the sHSP domain. The Cell attachment site signature appears at 94–96 (RGD).

It belongs to the small heat shock protein (HSP20) family. In terms of assembly, may form oligomeric structures.

The protein localises to the endoplasmic reticulum. The chain is 21.9 kDa heat shock protein (HSP21.9) from Oryza sativa subsp. japonica (Rice).